We begin with the raw amino-acid sequence, 254 residues long: 5-oxoprolinase subunit A (254 aa).

Belongs to the LamB/PxpA family. Forms a complex composed of PxpA, PxpB and PxpC.

It catalyses the reaction 5-oxo-L-proline + ATP + 2 H2O = L-glutamate + ADP + phosphate + H(+). In terms of biological role, catalyzes the cleavage of 5-oxoproline to form L-glutamate coupled to the hydrolysis of ATP to ADP and inorganic phosphate. The polypeptide is 5-oxoprolinase subunit A (Burkholderia orbicola (strain MC0-3)).